Consider the following 442-residue polypeptide: Cell adhesion molecule 1 (442 aa).

Residues 1–44 (MASVVLPSGSQCAAAAAAAAPPGLRLRLLLLLFSAAALIPTGDG) form the signal peptide. In terms of domain architecture, Ig-like V-type spans 45-139 (QNLFTKDVTV…PPQESYTTIT (95 aa)). Residues 45–374 (QNLFTKDVTV…EEGSIRAVDH (330 aa)) are Extracellular-facing. An intrachain disulfide couples Cys64 to Cys124. Residues Asn67, Asn101, Asn113, and Asn165 are each glycosylated (N-linked (GlcNAc...) asparagine). Ig-like C2-type domains are found at residues 144-238 (PRNL…RYLE) and 243-329 (PQVH…YMLY). Disulfide bonds link Cys166-Cys220 and Cys267-Cys313. Asn304 and Asn308 each carry an N-linked (GlcNAc...) asparagine glycan. The helical transmembrane segment at 375–395 (AVIGGVVAVVVFAMLCLLIIL) threads the bilayer. The Cytoplasmic segment spans residues 396 to 442 (GRYFARHKGTYFTHEAKGADDAADADTAIINAEGGQNNSEEKKEYFI). Thr422 is subject to Phosphothreonine. Ser434 bears the Phosphoserine mark.

The protein belongs to the nectin family. Homodimer (via Ig-like V-type domain). Interacts with FARP1. Interacts (via Ig-like V-type domain) with CRTAM (via Ig-like V-type domain); the interaction competes with CRTAM homodimerization and CADM1 homodimerization. Interacts (via C-terminus) with EPB41L3/DAL1. The interaction with EPB41L3/DAL1 may act to anchor CADM1 to the actin cytoskeleton. Interacts (via C-terminus) with MPP2 (via PDZ domain). Interacts (via C-terminus) with MPP3 (via PDZ domain); this interaction connects CADM1 with DLG1. Interacts (via C-terminus) with PALS2 (via PDZ domain). As to quaternary structure, (Microbial infection) Interacts with herpes virus 8 proteins vFLIP and vGPCR; these interactions are essential for NF-kappa-B activation. Post-translationally, glycosylation at Asn-67 and Asn-101 promotes adhesive binding and synapse induction.

Its subcellular location is the cell membrane. The protein localises to the synapse. Functionally, mediates homophilic cell-cell adhesion in a Ca(2+)-independent manner. Also mediates heterophilic cell-cell adhesion with CADM3 and NECTIN3 in a Ca(2+)-independent manner. Interaction with CRTAM promotes natural killer (NK) cell cytotoxicity and interferon-gamma (IFN-gamma) secretion by CD8+ cells in vitro as well as NK cell-mediated rejection of tumors expressing CADM1 in vivo. In mast cells, may mediate attachment to and promote communication with nerves. CADM1, together with MITF, is essential for development and survival of mast cells in vivo. By interacting with CRTAM and thus promoting the adhesion between CD8+ T-cells and CD8+ dendritic cells, regulates the retention of activated CD8+ T-cell within the draining lymph node. Required for the intestinal retention of intraepithelial CD4+ CD8+ T-cells and, to a lesser extent, intraepithelial and lamina propria CD8+ T-cells and CD4+ T-cells. Interaction with CRTAM promotes the adhesion to gut-associated CD103+ dendritic cells, which may facilitate the expression of gut-homing and adhesion molecules on T-cells and the conversion of CD4+ T-cells into CD4+ CD8+ T-cells. Acts as a synaptic cell adhesion molecule and plays a role in the formation of dendritic spines and in synapse assembly. May be involved in neuronal migration, axon growth, pathfinding, and fasciculation on the axons of differentiating neurons. May play diverse roles in the spermatogenesis including in the adhesion of spermatocytes and spermatids to Sertoli cells and for their normal differentiation into mature spermatozoa. Acts as a tumor suppressor in non-small-cell lung cancer (NSCLC) cells. May contribute to the less invasive phenotypes of lepidic growth tumor cells. (Microbial infection) Induces cell fusion in neuron infected by a neuropathogenic strain of measles. Interacts with measles hemagglutinin to trigger hyperfusogenic F-mediated membrane fusion and presumably transsynaptic cell-to-cell transmission of the virus. The chain is Cell adhesion molecule 1 from Homo sapiens (Human).